A 487-amino-acid chain; its full sequence is Betaine aldehyde dehydrogenase (487 aa).

K(+) contacts are provided by I27 and D93. G149–W151 lines the NAD(+) pocket. The active-site Charge relay system is the K161. NAD(+) is bound by residues K175–E178 and S228–T231. K(+) is bound at residue L243. E249 acts as the Proton acceptor in catalysis. 3 residues coordinate NAD(+): G251, C283, and E384. Catalysis depends on C283, which acts as the Nucleophile. Residue C283 is modified to Cysteine sulfenic acid (-SOH). K454 and G457 together coordinate K(+). The active-site Charge relay system is E461.

This sequence belongs to the aldehyde dehydrogenase family. As to quaternary structure, dimer of dimers. It depends on K(+) as a cofactor.

It carries out the reaction betaine aldehyde + NAD(+) + H2O = glycine betaine + NADH + 2 H(+). It participates in amine and polyamine biosynthesis; betaine biosynthesis via choline pathway; betaine from betaine aldehyde: step 1/1. Functionally, involved in the biosynthesis of the osmoprotectant glycine betaine. Catalyzes the irreversible oxidation of betaine aldehyde to the corresponding acid. The protein is Betaine aldehyde dehydrogenase of Brucella abortus (strain S19).